Consider the following 369-residue polypeptide: Maltose/maltodextrin import ATP-binding protein MalK (369 aa).

Residues 4–234 (VQLRNVTKAW…PADRFVAGFI (231 aa)) form the ABC transporter domain. 36–43 (GPSGCGKS) provides a ligand contact to ATP.

The protein belongs to the ABC transporter superfamily. Maltooligosaccharide importer (TC 3.A.1.1.1) family. In terms of assembly, the complex is composed of two ATP-binding proteins (MalK), two transmembrane proteins (MalG and MalK) and a solute-binding protein (MalE).

It localises to the cell inner membrane. It catalyses the reaction D-maltose(out) + ATP + H2O = D-maltose(in) + ADP + phosphate + H(+). Functionally, part of the ABC transporter complex MalEFGK involved in maltose/maltodextrin import. Responsible for energy coupling to the transport system. This Salmonella paratyphi A (strain ATCC 9150 / SARB42) protein is Maltose/maltodextrin import ATP-binding protein MalK.